The chain runs to 183 residues: NEDD8-conjugating enzyme Ubc12 (183 aa).

The residue at position 1 (M1) is an N-acetylmethionine. The interval M1 to A29 is disordered. The segment at M1 to L57 is interaction with UBA3. N6-acetyllysine is present on K3. The region spanning A29–I173 is the UBC core domain. The residue at position 50 (S50) is a Phosphoserine. The Glycyl thioester intermediate role is filled by C111. The residue at position 169 (R169) is an Asymmetric dimethylarginine; alternate. R169 is subject to Omega-N-methylarginine; alternate.

Belongs to the ubiquitin-conjugating enzyme family. UBC12 subfamily. As to quaternary structure, interacts with UBA3 and RBX1. Interacts (N-terminally acetylated form) with (via DCUN1 domain) DCUN1D1, DCUN1D2, DCUN1D3, DCUN1D4 and DCUN1D5. In terms of processing, the acetylation of Met-1 increases affinity for DCUN1D1 by about 2 orders of magnitude and is crucial for NEDD8 transfer to cullins.

It carries out the reaction [E1 NEDD8-activating enzyme]-S-[NEDD8 protein]-yl-L-cysteine + [E2 NEDD8-conjugating enzyme]-L-cysteine = [E1 NEDD8-activating enzyme]-L-cysteine + [E2 NEDD8-conjugating enzyme]-S-[NEDD8-protein]-yl-L-cysteine.. Its pathway is protein modification; protein neddylation. In terms of biological role, accepts the ubiquitin-like protein NEDD8 from the UBA3-NAE1 E1 complex and catalyzes its covalent attachment to other proteins. The specific interaction with the E3 ubiquitin ligase RBX1, but not RBX2, suggests that the RBX1-UBE2M complex neddylates specific target proteins, such as CUL1, CUL2, CUL3 and CUL4. Involved in cell proliferation. This chain is NEDD8-conjugating enzyme Ubc12 (Ube2m), found in Mus musculus (Mouse).